The primary structure comprises 488 residues: MPNSTGKIAQVIGPVVDVAFPINGDLPEINNALTVAKKDGSQLVLEVALELGDGVMRTIAMDSTDGLQRNMAVQDTGGPISVPVGKDTLGRVFNVLGDPIDGGEAFGPDHRRDSIHRDAPKFEDLNTSSEILETGIKVIDLLEPYLRGGKVGLFGGAGVGKTVLIQELIHNIAEEHGGISVFTGVGERTREGNDLYFEMKESGVLENTAMVFGQMNEPPGARMRVALTGLTIAEYFRDVEGQDVLLFIDNIFRFTQAGSEVSALLGRIPSAVGYQPTLATEMGQLQERITSTKKGSVTSIQAIYVPADDYTDPAPATTFAHLDATTNLERRLTEQGIYPAVDPLESSSSALTPEIVGDEHYKVATEVQQVLQRYRELQDIISILGMDELSDEEKVVVARARRIQFFLSQNFNVAERFTGQPGSYVPVEETVKGFKAILDGKYDDYPEDAFRSVGRIEEVVEKAKKMGFAPDDQNTDADEKPAAQAAAN.

ATP is bound at residue G155–T162. A disordered region spans residues G467–N488.

The protein belongs to the ATPase alpha/beta chains family. As to quaternary structure, F-type ATPases have 2 components, CF(1) - the catalytic core - and CF(0) - the membrane proton channel. CF(1) has five subunits: alpha(3), beta(3), gamma(1), delta(1), epsilon(1). CF(0) has three main subunits: a(1), b(2) and c(9-12). The alpha and beta chains form an alternating ring which encloses part of the gamma chain. CF(1) is attached to CF(0) by a central stalk formed by the gamma and epsilon chains, while a peripheral stalk is formed by the delta and b chains.

Its subcellular location is the cell membrane. It catalyses the reaction ATP + H2O + 4 H(+)(in) = ADP + phosphate + 5 H(+)(out). Functionally, produces ATP from ADP in the presence of a proton gradient across the membrane. The catalytic sites are hosted primarily by the beta subunits. This chain is ATP synthase subunit beta, found in Lacticaseibacillus casei (strain BL23) (Lactobacillus casei).